A 303-amino-acid chain; its full sequence is D-alanine--D-alanine ligase B (303 aa).

Positions 103 to 298 constitute an ATP-grasp domain; the sequence is KLLWKGAGLP…YEDLCLKVLD (196 aa). 129–184 provides a ligand contact to ATP; it reads ERQLGLPIFVKPSTEGSSIGVTKVKQPGELRAAFEEARKYDKVVIAEQFIGGGEYT. Residues aspartate 252, glutamate 265, and asparagine 267 each coordinate Mg(2+).

The protein belongs to the D-alanine--D-alanine ligase family. Mg(2+) serves as cofactor. Requires Mn(2+) as cofactor.

It is found in the cytoplasm. It carries out the reaction 2 D-alanine + ATP = D-alanyl-D-alanine + ADP + phosphate + H(+). The protein operates within cell wall biogenesis; peptidoglycan biosynthesis. Its function is as follows. Cell wall formation. This chain is D-alanine--D-alanine ligase B, found in Chromobacterium violaceum (strain ATCC 12472 / DSM 30191 / JCM 1249 / CCUG 213 / NBRC 12614 / NCIMB 9131 / NCTC 9757 / MK).